We begin with the raw amino-acid sequence, 182 residues long: UPF0397 protein BCAH187_A2708 (182 aa).

The next 5 helical transmembrane spans lie at 9 to 29 (VVAI…GFSI), 40 to 60 (AILT…IGLI), 71 to 91 (WGIW…MGFI), 114 to 134 (ITGL…DIIV), and 142 to 162 (IVIQ…VLGL).

It belongs to the UPF0397 family.

Its subcellular location is the cell membrane. This Bacillus cereus (strain AH187) protein is UPF0397 protein BCAH187_A2708.